Here is a 642-residue protein sequence, read N- to C-terminus: Threonine--tRNA ligase (642 aa).

In terms of domain architecture, TGS spans 1–61 (MPVITLPDGS…ENDAQLAIIT (61 aa)). Residues 243 to 534 (DHRKIGKQLD…LTEEFAGFFP (292 aa)) are catalytic. Lys286 bears the N6-acetyllysine mark. The Zn(2+) site is built by Cys334, His385, and His511.

This sequence belongs to the class-II aminoacyl-tRNA synthetase family. As to quaternary structure, homodimer. Zn(2+) is required as a cofactor.

It is found in the cytoplasm. The catalysed reaction is tRNA(Thr) + L-threonine + ATP = L-threonyl-tRNA(Thr) + AMP + diphosphate + H(+). Functionally, catalyzes the attachment of threonine to tRNA(Thr) in a two-step reaction: L-threonine is first activated by ATP to form Thr-AMP and then transferred to the acceptor end of tRNA(Thr). Also edits incorrectly charged L-seryl-tRNA(Thr). The chain is Threonine--tRNA ligase from Escherichia fergusonii (strain ATCC 35469 / DSM 13698 / CCUG 18766 / IAM 14443 / JCM 21226 / LMG 7866 / NBRC 102419 / NCTC 12128 / CDC 0568-73).